The sequence spans 98 residues: MALTKAEMSEHLFEKLGLSKRDAKDLVELFFEEVRRALENGEQVKLSGFGNFDLRDKNQRPGRNPKTGEDIPITARRVVTFRPGQKLKSRVENASPKE.

Positions Phe-49–Asp-70 are disordered.

Belongs to the bacterial histone-like protein family. In terms of assembly, heterodimer of an alpha and a beta chain.

In terms of biological role, this protein is one of the two subunits of integration host factor, a specific DNA-binding protein that functions in genetic recombination as well as in transcriptional and translational control. The polypeptide is Integration host factor subunit alpha (Serratia proteamaculans (strain 568)).